A 270-amino-acid polypeptide reads, in one-letter code: uncharacterized protein (270 aa).

Over residues Met-1–Thr-10 the composition is skewed to basic and acidic residues. Disordered stretches follow at residues Met-1 to Trp-115 and Gln-215 to Gln-236. 2 stretches are compositionally biased toward low complexity: residues Ser-26–Gly-41 and Gly-98–Thr-113.

It belongs to the adhesin P1 family.

This is an uncharacterized protein from Mycoplasma pneumoniae (strain ATCC 29342 / M129 / Subtype 1) (Mycoplasmoides pneumoniae).